The sequence spans 535 residues: Formate--tetrahydrofolate ligase (535 aa).

Residue 50 to 57 (TPAGEGKT) coordinates ATP.

The protein belongs to the formate--tetrahydrofolate ligase family.

It carries out the reaction (6S)-5,6,7,8-tetrahydrofolate + formate + ATP = (6R)-10-formyltetrahydrofolate + ADP + phosphate. It participates in one-carbon metabolism; tetrahydrofolate interconversion. The protein is Formate--tetrahydrofolate ligase of Picrophilus torridus (strain ATCC 700027 / DSM 9790 / JCM 10055 / NBRC 100828 / KAW 2/3).